The primary structure comprises 283 residues: Formamidopyrimidine-DNA glycosylase (283 aa).

Proline 2 functions as the Schiff-base intermediate with DNA in the catalytic mechanism. Glutamate 3 acts as the Proton donor in catalysis. The Proton donor; for beta-elimination activity role is filled by lysine 60. Positions 95, 114, and 159 each coordinate DNA. The segment at 244–278 adopts an FPG-type zinc-finger fold; the sequence is WVYGRHNQPCRVCGTPIERIKLGGRSSHFCPQCQP. The Proton donor; for delta-elimination activity role is filled by arginine 268.

The protein belongs to the FPG family. Monomer. Zn(2+) serves as cofactor.

It catalyses the reaction Hydrolysis of DNA containing ring-opened 7-methylguanine residues, releasing 2,6-diamino-4-hydroxy-5-(N-methyl)formamidopyrimidine.. The enzyme catalyses 2'-deoxyribonucleotide-(2'-deoxyribose 5'-phosphate)-2'-deoxyribonucleotide-DNA = a 3'-end 2'-deoxyribonucleotide-(2,3-dehydro-2,3-deoxyribose 5'-phosphate)-DNA + a 5'-end 5'-phospho-2'-deoxyribonucleoside-DNA + H(+). Functionally, involved in base excision repair of DNA damaged by oxidation or by mutagenic agents. Acts as a DNA glycosylase that recognizes and removes damaged bases. Has a preference for oxidized purines, such as 7,8-dihydro-8-oxoguanine (8-oxoG). Has AP (apurinic/apyrimidinic) lyase activity and introduces nicks in the DNA strand. Cleaves the DNA backbone by beta-delta elimination to generate a single-strand break at the site of the removed base with both 3'- and 5'-phosphates. The chain is Formamidopyrimidine-DNA glycosylase from Crocosphaera subtropica (strain ATCC 51142 / BH68) (Cyanothece sp. (strain ATCC 51142)).